Consider the following 737-residue polypeptide: MAAPTREEWRHLDPSQRNLYRDVMLETYSHLLSVGYQVPEAEVVMLEQGKEPWALQGERPRQSCPGKKLWDHNQCRKILSYKQVSSQPQKMYPGEKPYECAEFEKIFTQKSQLKVHLKVLAGEKLYVCIECGKAFVQKPEFIIHQKTHMREKPFKCNECGKSFFQVSSLFRHQRIHTGEKLYECSQCGKGFSYNSDLSIHEKIHTGERHHECTDCGKAFTQKSTLKMHQKIHTGERSYICIECGQAFIQKTHLIAHRRIHTGEKPYECSNCGKSFISKSQLQVHQRVHTRVKPYICTEYGKVFSNNSNLITHKKVQSREKSSICTECGKAFTYRSELIIHQRIHTGEKPYACSDCGKAFTQKSALTVHQRIHTGEKSYICMKCGLAFIQKAHLIAHQIIHTGEKPYKCGHCGKLFTSKSQLHVHKRIHTGEKPYMCNKCGKAFTNRSNLITHQKTHTGEKSYICSKCGKAFTQRSDLITHQRIHTGEKPYECSTCGKAFTQKSHLNIHQKIHTGERQYECHECGKAFNQKSILIVHQKIHTGEKPYVCTECGRAFIRKSNFITHQRIHTGEKPYECSDCGKSFTSKSQLLVHQPLHTGEKPYVCAECGKAFSGRSNLSKHQKTHTGEKPYICSECGKTFRQKSELITHHRIHTGEKPYECSDCGKSFTKKSQLQVHQRIHTGEKPYVCAECGKAFTDRSNLNKHQTTHTGDRPYKCGICGKGFVQKSVFSVHQSNHA.

The region spanning 1 to 65 (MAAPTREEWR…QGERPRQSCP (65 aa)) is the KRAB domain. 6 C2H2-type zinc fingers span residues 126 to 148 (YVCI…QKTH), 154 to 176 (FKCN…QRIH), 182 to 204 (YECS…EKIH), 210 to 232 (HECT…QKIH), 238 to 260 (YICI…RRIH), and 266 to 288 (YECS…QRVH). The C2H2-type 7; degenerate zinc finger occupies 294–316 (YICTEYGKVFSNNSNLITHKKVQ). 15 C2H2-type zinc fingers span residues 322–344 (SICT…QRIH), 350–372 (YACS…QRIH), 378–400 (YICM…QIIH), 406–428 (YKCG…KRIH), 434–456 (YMCN…QKTH), 462–484 (YICS…QRIH), 490–512 (YECS…QKIH), 518–540 (YECH…QKIH), 546–568 (YVCT…QRIH), 574–596 (YECS…QPLH), 602–624 (YVCA…QKTH), 630–652 (YICS…HRIH), 658–680 (YECS…QRIH), 686–708 (YVCA…QTTH), and 714–736 (YKCG…QSNH).

This sequence belongs to the krueppel C2H2-type zinc-finger protein family.

The protein localises to the nucleus. May be involved in transcriptional regulation. This Pongo abelii (Sumatran orangutan) protein is Zinc finger protein 585A (ZNF585A).